A 776-amino-acid polypeptide reads, in one-letter code: DNA ligase (776 aa).

Residues 31–35 (DAEYD), 80–81 (SL), and Glu112 contribute to the NAD(+) site. Lys114 (N6-AMP-lysine intermediate) is an active-site residue. NAD(+) contacts are provided by Arg135, Glu172, Lys288, and Lys312. 4 residues coordinate Zn(2+): Cys406, Cys409, Cys436, and Cys442. Residues 693–776 (AEGLPLAGQT…TFLAEQGIAV (84 aa)) form the BRCT domain.

This sequence belongs to the NAD-dependent DNA ligase family. LigA subfamily. Requires Mg(2+) as cofactor. Mn(2+) is required as a cofactor.

It catalyses the reaction NAD(+) + (deoxyribonucleotide)n-3'-hydroxyl + 5'-phospho-(deoxyribonucleotide)m = (deoxyribonucleotide)n+m + AMP + beta-nicotinamide D-nucleotide.. Its function is as follows. DNA ligase that catalyzes the formation of phosphodiester linkages between 5'-phosphoryl and 3'-hydroxyl groups in double-stranded DNA using NAD as a coenzyme and as the energy source for the reaction. It is essential for DNA replication and repair of damaged DNA. This chain is DNA ligase, found in Pseudomonas putida (strain ATCC 47054 / DSM 6125 / CFBP 8728 / NCIMB 11950 / KT2440).